Consider the following 678-residue polypeptide: Macrolide export ATP-binding/permease protein MacB 1 (678 aa).

In terms of domain architecture, ABC transporter spans Leu-11–Ile-249. ATP is bound at residue Gly-47 to Ser-54. 4 helical membrane-spanning segments follow: residues Ala-303–Gly-323, Ile-558–Val-578, Leu-608–Phe-628, and Ala-641–Phe-661.

The protein belongs to the ABC transporter superfamily. Macrolide exporter (TC 3.A.1.122) family. As to quaternary structure, homodimer. Part of the tripartite efflux system MacAB-TolC, which is composed of an inner membrane transporter, MacB, a periplasmic membrane fusion protein, MacA, and an outer membrane component, TolC. The complex forms a large protein conduit and can translocate molecules across both the inner and outer membranes. Interacts with MacA.

The protein localises to the cell inner membrane. Its function is as follows. Part of the tripartite efflux system MacAB-TolC. MacB is a non-canonical ABC transporter that contains transmembrane domains (TMD), which form a pore in the inner membrane, and an ATP-binding domain (NBD), which is responsible for energy generation. Confers resistance against macrolides. The sequence is that of Macrolide export ATP-binding/permease protein MacB 1 from Yersinia pestis bv. Antiqua (strain Nepal516).